The sequence spans 162 residues: MSVDVAIIMGSQSDWETMHHAADTLEALGISFDARIVSAHRTPDRLVAFAKGAKAEGFKVIIAGAGGAAHLPGMAAAMTPLPVFGVPVQSKALSGQDSLLSIVQMPAGIPVGTLAIGRAGAVNAALLAAAVLALYDEALAARLDEWRKAQTESVAERPSNEA.

3 residues coordinate substrate: Ser11, Asp14, and Arg41.

Belongs to the AIR carboxylase family. Class I subfamily.

The catalysed reaction is 5-carboxyamino-1-(5-phospho-D-ribosyl)imidazole + H(+) = 5-amino-1-(5-phospho-D-ribosyl)imidazole-4-carboxylate. Its pathway is purine metabolism; IMP biosynthesis via de novo pathway; 5-amino-1-(5-phospho-D-ribosyl)imidazole-4-carboxylate from 5-amino-1-(5-phospho-D-ribosyl)imidazole (N5-CAIR route): step 2/2. Catalyzes the conversion of N5-carboxyaminoimidazole ribonucleotide (N5-CAIR) to 4-carboxy-5-aminoimidazole ribonucleotide (CAIR). The protein is N5-carboxyaminoimidazole ribonucleotide mutase of Brucella melitensis biotype 1 (strain ATCC 23456 / CCUG 17765 / NCTC 10094 / 16M).